Reading from the N-terminus, the 560-residue chain is MSPAKDVKVYKKILEQNKDIQDLLDKIVFDAQHGQIWFDENRMLLMHTSILGFLRKDLYQMLGLERTKRFFIRCGYQAGMRDAEVTSKLRPNLNEAEAFMAGPQMHGIRGMVQVEVNELHLSHDLKQFYADFNWLNSFEAEVHLSEFGASDQPACWMLLGYACGYSSFVMGQTIIYQETHCVAQGDEHCRIIGKPLSEWENADELIRFMSPDAVSDEIIALQAELNQLKKNIYTEAESDYTMFNAVGESVAYRKVCDLLKKAAGSKVAVLLQGETGVGKEAFARGIHNGSQRQAQPFVAVNCACIPPDLIESELFGVEKGAFTGAVQSRMGKFERAHGGTIFLDEVVELSPRAQAALLRMLQEGEFERVGDSRTRQVDVRLVAATNEDLEQAVKDGKFRADLYYRLNIFPVIIPPLRERREDIPLLINHFLARFENMYNKTLKGLSDKAKNFMMKYDWPGNIRELENLLERATLLTDHQQEIKLDSLFPQHKDLEAVGETAQSLINVEDLFSENFSLDQLEQNIIRSAMDKSQQNVSEAARMLGISRATLDYRLKKITLG.

Residues His-106 and Trp-134 each contribute to the phenol site. Zn(2+) is bound by residues Cys-155, Glu-178, Cys-181, and Cys-189. The Sigma-54 factor interaction domain maps to 245–474; that stretch reads AVGESVAYRK…LENLLERATL (230 aa). ATP contacts are provided by residues 273–280 and 336–345; these read GETGVGKE and AHGGTIFLDE.

Homodimer.

Activity is triggered by phenol binding. Involved in the regulation of the phenol degradation pathway. Activates phenol hydroxylase expression in the presence of phenol. In Acinetobacter guillouiae (Acinetobacter genomosp. 11), this protein is Phenol regulator MopR.